Reading from the N-terminus, the 510-residue chain is GMP synthase [glutamine-hydrolyzing] (510 aa).

Positions 5–195 (LVLVVDFGGQ…LFNVCNLKGD (191 aa)) constitute a Glutamine amidotransferase type-1 domain. The Nucleophile role is filled by Cys-82. Catalysis depends on residues His-169 and Glu-171. Residues 196 to 385 (WSMSSFAEQQ…LGIPHKLVWR (190 aa)) form the GMPS ATP-PPase domain. 223–229 (SGGVDSS) contributes to the ATP binding site.

As to quaternary structure, homodimer.

The enzyme catalyses XMP + L-glutamine + ATP + H2O = GMP + L-glutamate + AMP + diphosphate + 2 H(+). It functions in the pathway purine metabolism; GMP biosynthesis; GMP from XMP (L-Gln route): step 1/1. Catalyzes the synthesis of GMP from XMP. This is GMP synthase [glutamine-hydrolyzing] from Clostridium botulinum (strain Loch Maree / Type A3).